The following is a 66-amino-acid chain: Small ribosomal subunit protein bS21 (66 aa).

This sequence belongs to the bacterial ribosomal protein bS21 family.

The chain is Small ribosomal subunit protein bS21 from Rickettsia peacockii (strain Rustic).